An 84-amino-acid chain; its full sequence is Toxin Ts4 (84 aa).

Positions 1 to 19 (MKRMILFISCLLLIDIVVG) are cleaved as a signal peptide. An LCN-type CS-alpha/beta domain is found at 21 to 82 (REGYPADSKG…IWTSETNKCG (62 aa)). Disulfide bonds link Cys-31/Cys-81, Cys-35/Cys-57, Cys-43/Cys-62, and Cys-47/Cys-64. Cys-81 carries the cysteine amide modification. A propeptide spanning residues 82 to 84 (GKK) is cleaved from the precursor.

Belongs to the long (4 C-C) scorpion toxin superfamily. Sodium channel inhibitor family. Alpha subfamily. In terms of tissue distribution, expressed by the venom gland.

It localises to the secreted. In terms of biological role, not toxic. Induces an immune response similar to that induced by whole venom. Induces a dose dependent release of the neurotransmitters glutamic acid and gamma aminobutyric acid from rat brain synaptosomes. Thus, polyclonal antibodies raised against this protein can neutralize the effects of the venom. The chain is Toxin Ts4 from Tityus serrulatus (Brazilian scorpion).